The sequence spans 110 residues: Nucleoid-associated protein YpAngola_A2890 (110 aa).

Positions 90–110 (KEKMASVSNGMQLPPGFKMPF) are disordered.

It belongs to the YbaB/EbfC family. In terms of assembly, homodimer.

It is found in the cytoplasm. Its subcellular location is the nucleoid. Functionally, binds to DNA and alters its conformation. May be involved in regulation of gene expression, nucleoid organization and DNA protection. This Yersinia pestis bv. Antiqua (strain Angola) protein is Nucleoid-associated protein YpAngola_A2890.